Here is a 274-residue protein sequence, read N- to C-terminus: 2,3,4,5-tetrahydropyridine-2,6-dicarboxylate N-succinyltransferase (274 aa).

Residues R104 and D141 each contribute to the substrate site.

The protein belongs to the transferase hexapeptide repeat family. Homotrimer.

Its subcellular location is the cytoplasm. It catalyses the reaction (S)-2,3,4,5-tetrahydrodipicolinate + succinyl-CoA + H2O = (S)-2-succinylamino-6-oxoheptanedioate + CoA. It functions in the pathway amino-acid biosynthesis; L-lysine biosynthesis via DAP pathway; LL-2,6-diaminopimelate from (S)-tetrahydrodipicolinate (succinylase route): step 1/3. This chain is 2,3,4,5-tetrahydropyridine-2,6-dicarboxylate N-succinyltransferase, found in Buchnera aphidicola subsp. Baizongia pistaciae (strain Bp).